The chain runs to 223 residues: DNA mismatch repair protein MutH (223 aa).

Belongs to the MutH family.

Its subcellular location is the cytoplasm. Its function is as follows. Sequence-specific endonuclease that cleaves unmethylated GATC sequences. It is involved in DNA mismatch repair. This Shewanella sp. (strain MR-4) protein is DNA mismatch repair protein MutH.